The following is a 289-amino-acid chain: Probable phosphoribulokinase (289 aa).

12-20 (GSSGAGTTT) is an ATP binding site.

The protein belongs to the phosphoribulokinase family.

It carries out the reaction D-ribulose 5-phosphate + ATP = D-ribulose 1,5-bisphosphate + ADP + H(+). This chain is Probable phosphoribulokinase (prkB), found in Escherichia coli (strain K12).